We begin with the raw amino-acid sequence, 363 residues long: S-adenosylmethionine:tRNA ribosyltransferase-isomerase (363 aa).

It belongs to the QueA family. In terms of assembly, monomer.

The protein localises to the cytoplasm. It catalyses the reaction 7-aminomethyl-7-carbaguanosine(34) in tRNA + S-adenosyl-L-methionine = epoxyqueuosine(34) in tRNA + adenine + L-methionine + 2 H(+). It participates in tRNA modification; tRNA-queuosine biosynthesis. Transfers and isomerizes the ribose moiety from AdoMet to the 7-aminomethyl group of 7-deazaguanine (preQ1-tRNA) to give epoxyqueuosine (oQ-tRNA). The sequence is that of S-adenosylmethionine:tRNA ribosyltransferase-isomerase from Brucella abortus (strain S19).